We begin with the raw amino-acid sequence, 221 residues long: Ethylene-inducing xylanase 4 (221 aa).

A signal peptide spans 1–19 (MVSFSTLLTACTAITGALG). The 191-residue stretch at 28–218 (NVTPNAQGTH…SAGRASVVVE (191 aa)) folds into the GH11 domain. Residue asparagine 96 is glycosylated (N-linked (GlcNAc...) asparagine). The Nucleophile role is filled by glutamate 114. Glutamate 205 acts as the Proton donor in catalysis.

The protein belongs to the glycosyl hydrolase 11 (cellulase G) family.

The catalysed reaction is Endohydrolysis of (1-&gt;4)-beta-D-xylosidic linkages in xylans.. Its pathway is glycan degradation; xylan degradation. Functionally, endo-1,4-beta-xylanase involved in the hydrolysis of xylan, a major structural heterogeneous polysaccharide found in plant biomass representing the second most abundant polysaccharide in the biosphere, after cellulose. May act as an elicitor of plant defense responses in certain plants but does not exhibit any cell death when transiently expressed in N.benthamiana. In Verticillium dahliae (strain VdLs.17 / ATCC MYA-4575 / FGSC 10137) (Verticillium wilt), this protein is Ethylene-inducing xylanase 4.